A 95-amino-acid chain; its full sequence is UPF0235 protein PTH_1821 (95 aa).

It belongs to the UPF0235 family.

The chain is UPF0235 protein PTH_1821 from Pelotomaculum thermopropionicum (strain DSM 13744 / JCM 10971 / SI).